We begin with the raw amino-acid sequence, 793 residues long: 3',5'-cyclic-nucleotide phosphodiesterase regA (793 aa).

Positions 1–153 are disordered; the sequence is MNNKQEEIDQ…SSHRVSDFSD (153 aa). Composition is skewed to low complexity over residues 13–34, 54–69, and 80–121; these read SSTS…DSTS, NKNN…SNNN, and NNSS…NNNN. One can recognise a Response regulatory domain in the interval 161-280; it reads RILVADDDDV…LLKKKIDTVL (120 aa). Aspartate 212 carries the 4-aspartylphosphate modification. Residues 410–733 enclose the PDEase domain; it reads RRNSIPTFPQ…ENWQAYMELQ (324 aa). Histidine 487 serves as the catalytic Proton donor. The a divalent metal cation site is built by histidine 491, histidine 527, aspartate 528, and aspartate 639. Positions 756 to 793 are disordered; sequence KLPKIDEEENRDKVSSSSSSSTAPLTSTSSSNNETSSS. Residues 770-793 show a composition bias toward low complexity; the sequence is SSSSSSSTAPLTSTSSSNNETSSS.

This sequence belongs to the cyclic nucleotide phosphodiesterase family. The cofactor is a divalent metal cation. In terms of processing, the phosphorelay mechanism involves the sequential transfer of a phosphate group from Asp-212 of pde2 to 'His-65' of rdeA. Phosphorylation of Asp-212 activates the phosphodiesterase domain.

It localises to the cytoplasm. Its subcellular location is the cytosol. It catalyses the reaction 3',5'-cyclic AMP + H2O = AMP + H(+). Its activity is regulated as follows. Inhibited by 3-isobutyl-1-methylxanthine (IBMX). Its function is as follows. Phosphodiesterase specific for cAMP. Involved in the degradation of intracellular cAMP. Morphological suppressor of tagB. Phosphorelay protein that accepts phosphate from rdeA or supplies phosphate from regA; depending on the relative concentration of the phosphodonor proteins. The polypeptide is 3',5'-cyclic-nucleotide phosphodiesterase regA (regA) (Dictyostelium discoideum (Social amoeba)).